The sequence spans 315 residues: DNA-directed RNA polymerase subunit alpha (315 aa).

Residues 1 to 228 are alpha N-terminal domain (alpha-NTD); sequence MLEIEKPKIE…EHLRLFVGLT (228 aa). Residues 245-315 are alpha C-terminal domain (alpha-CTD); it reads KNKLLEMPIE…LGLDLRHDEE (71 aa).

Belongs to the RNA polymerase alpha chain family. As to quaternary structure, homodimer. The RNAP catalytic core consists of 2 alpha, 1 beta, 1 beta' and 1 omega subunit. When a sigma factor is associated with the core the holoenzyme is formed, which can initiate transcription.

It carries out the reaction RNA(n) + a ribonucleoside 5'-triphosphate = RNA(n+1) + diphosphate. In terms of biological role, DNA-dependent RNA polymerase catalyzes the transcription of DNA into RNA using the four ribonucleoside triphosphates as substrates. The protein is DNA-directed RNA polymerase subunit alpha of Desulforudis audaxviator (strain MP104C).